Reading from the N-terminus, the 288-residue chain is Beta-lactamase PSE-4 (288 aa).

Residues 1 to 17 (MKFLLAFSLLIPSVVFA) form the signal peptide. Serine 65 functions as the Acyl-ester intermediate in the catalytic mechanism. The cysteines at positions 72 and 118 are disulfide-linked. 229–231 (RSG) contacts substrate.

The protein belongs to the class-A beta-lactamase family.

The catalysed reaction is a beta-lactam + H2O = a substituted beta-amino acid. Its function is as follows. Hydrolyzes both carbenicillin and oxacillin. The chain is Beta-lactamase PSE-4 (pse4) from Pseudomonas aeruginosa.